Consider the following 357-residue polypeptide: MAEPARALRVVRIYLDGAHGLGKTTTGRALAAASTAGEGVLFFPEPMAYWRTMFGTDALSGILAASARCAAASHGSARARRAGAPRRRGRGGPGCVLPGQVRGPVLNFARARVRAAAPPGPAPGGTVTLVFDRHPVAACLCYPFARYCLREINAEDLLMLAAAMPPEAPGANLVVCTLPPAEQQRRLAARARPGDRADAGFLVAVRNAYALLVNTCAFLRAGGDGATAGTRWSGRTQMHWPRSQTPVVMNAKCAGAGLRDTLFAALKCRELYPGGGTGLPAVHAWALDALAGRLAALEVFVLDVSAAPDACAAAVLDMRPAMQAACADGAAGATLATLARQFALEMAGEATAGPRGL.

17–24 contacts ATP; it reads GAHGLGKT. Residue Glu-45 is the Proton acceptor of the active site. Residue Arg-186 participates in ATP binding. Residue Arg-192 participates in substrate binding.

It belongs to the herpesviridae thymidine kinase family. Homodimer.

It catalyses the reaction thymidine + ATP = dTMP + ADP + H(+). Catalyzes the transfer of the gamma-phospho group of ATP to thymidine to generate dTMP in the salvage pathway of pyrimidine synthesis. The dTMP serves as a substrate for DNA polymerase during viral DNA replication. Allows the virus to be reactivated and to grow in non-proliferative cells lacking a high concentration of phosphorylated nucleic acid precursors. The protein is Thymidine kinase of Bovine herpesvirus 1 (strain 6660) (BoHV-1).